Here is a 1749-residue protein sequence, read N- to C-terminus: E3 ubiquitin-protein ligase UBR1 (1749 aa).

Alanine 2 carries the post-translational modification N-acetylalanine. Residue threonine 21 is modified to Phosphothreonine. The segment at 97-168 adopts a UBR-type zinc-finger fold; sequence QLCGRVFKSG…TGPFCVNHEP (72 aa). Residues cysteine 99, cysteine 112, cysteine 115, cysteine 124, cysteine 127, histidine 133, and histidine 136 each coordinate Zn(2+). Residue phenylalanine 148 participates in a peptide binding. Residue cysteine 149 coordinates Zn(2+). Aspartate 150 contributes to the a peptide binding site. Cysteine 151 lines the Zn(2+) pocket. Aspartate 153 serves as a coordination point for a peptide. Zn(2+) is bound by residues cysteine 163 and histidine 166. A disordered region spans residues 842–868; that stretch reads QHSKAEHMQKKRRKQENKDEALPPPPP. Positions 1019-1054 are UBC2-binding region (U2BR); the sequence is RKRKAEAARLHRQKIMAQMSALQKNFIETHKLMYDN. Residues cysteine 1098, cysteine 1101, cysteine 1159, histidine 1161, histidine 1164, and cysteine 1167 each coordinate Zn(2+). The RING-type; atypical zinc finger occupies 1098–1201; it reads CILCQEEQEV…SGEYLCPLCK (104 aa). Position 1179 is a phosphoserine (serine 1179). Cysteine 1197, cysteine 1200, cysteine 1627, cysteine 1630, and cysteine 1653 together coordinate Zn(2+).

This sequence belongs to the E3 ubiquitin-protein ligase UBR1-like family. In terms of assembly, interacts with RECQL4. In terms of tissue distribution, broadly expressed, with highest levels in skeletal muscle, kidney and pancreas. Present in acinar cells of the pancreas (at protein level).

The protein localises to the cytoplasm. It is found in the cytosol. The catalysed reaction is S-ubiquitinyl-[E2 ubiquitin-conjugating enzyme]-L-cysteine + [acceptor protein]-L-lysine = [E2 ubiquitin-conjugating enzyme]-L-cysteine + N(6)-ubiquitinyl-[acceptor protein]-L-lysine.. It participates in protein modification; protein ubiquitination. Its activity is regulated as follows. Inhibited by the small-molecule compound RF-C11, which bears two heterovalent ligands: RF-C11 inhibits activity toward both type-1 and type-2 N-degrons. Functionally, E3 ubiquitin-protein ligase which is a component of the N-end rule pathway. Recognizes and binds proteins bearing specific N-terminal residues that are destabilizing according to the N-end rule, leading to their ubiquitination and subsequent degradation. Recognizes both type-1 and type-2 N-degrons, containing positively charged amino acids (Arg, Lys and His) and bulky and hydrophobic amino acids, respectively. Does not ubiquitinate proteins that are acetylated at the N-terminus. In contrast, it strongly binds methylated N-degrons. Binds leucine and is a negative regulator of the leucine-mTOR signaling pathway, thereby controlling cell growth. In Homo sapiens (Human), this protein is E3 ubiquitin-protein ligase UBR1.